The following is a 214-amino-acid chain: MRIILLGAPGAGKGTQAQFIMEQYGIPQISTGDMLRAAVKAGTPLGLEAKKVMDAGQLVSDDLIIGLVKERIAQDDCAKGFLLDGFPRTIPQADAMAANGISIDHVIEIDVPDEEIVKRMSGRRVHPGSGRVYHVVFNPPKVEGKDDVTGEDLAIRPDDEEATVRKRLGIYHEQTKPLVEYYGKVAAAGNTQYHKFDGTQSVAAVSEQLASVLK.

Residue 10 to 15 (GAGKGT) participates in ATP binding. An NMP region spans residues 30–59 (STGDMLRAAVKAGTPLGLEAKKVMDAGQLV). Residues threonine 31, arginine 36, 57–59 (QLV), 85–88 (GFPR), and glutamine 92 each bind AMP. Residues 122–159 (GRRVHPGSGRVYHVVFNPPKVEGKDDVTGEDLAIRPDD) form an LID region. ATP is bound by residues arginine 123 and 132-133 (VY). Residues arginine 156 and arginine 167 each coordinate AMP. Glutamine 200 serves as a coordination point for ATP.

Belongs to the adenylate kinase family. Monomer.

Its subcellular location is the cytoplasm. It catalyses the reaction AMP + ATP = 2 ADP. Its pathway is purine metabolism; AMP biosynthesis via salvage pathway; AMP from ADP: step 1/1. Its function is as follows. Catalyzes the reversible transfer of the terminal phosphate group between ATP and AMP. Plays an important role in cellular energy homeostasis and in adenine nucleotide metabolism. The chain is Adenylate kinase from Shewanella oneidensis (strain ATCC 700550 / JCM 31522 / CIP 106686 / LMG 19005 / NCIMB 14063 / MR-1).